A 153-amino-acid chain; its full sequence is Large ribosomal subunit protein uL15 (153 aa).

Belongs to the universal ribosomal protein uL15 family. As to quaternary structure, part of the 50S ribosomal subunit.

Functionally, binds to the 23S rRNA. The polypeptide is Large ribosomal subunit protein uL15 (Pelagibacter ubique (strain HTCC1062)).